The sequence spans 476 residues: DnaJ homolog subfamily C member 7 homolog (476 aa).

Residues 1 to 22 are disordered; it reads MTEVETTHMNAGTESQQEPAEL. Over residues 7–18 the composition is skewed to polar residues; that stretch reads THMNAGTESQQE. 7 TPR repeats span residues 23–56, 59–92, 143–176, 177–210, 223–256, 261–294, and 295–328; these read AEKQ…GSDS, AIYY…KPDV, MSWM…NPKN, VEAL…DPDC, LENT…DPDN, AKLY…DSSY, and LKGL…DASD. The J domain maps to 349 to 414; that stretch reads DHYKILGVSK…ESRRRFDSGV (66 aa).

It localises to the cytoplasm. This chain is DnaJ homolog subfamily C member 7 homolog, found in Schizosaccharomyces pombe (strain 972 / ATCC 24843) (Fission yeast).